A 176-amino-acid polypeptide reads, in one-letter code: Protein GrpE (176 aa).

The interval 1-31 (MSEQKQEFENENAENSEHLQDENLQNIEDVE) is disordered.

Belongs to the GrpE family. In terms of assembly, homodimer.

It localises to the cytoplasm. Participates actively in the response to hyperosmotic and heat shock by preventing the aggregation of stress-denatured proteins, in association with DnaK and GrpE. It is the nucleotide exchange factor for DnaK and may function as a thermosensor. Unfolded proteins bind initially to DnaJ; upon interaction with the DnaJ-bound protein, DnaK hydrolyzes its bound ATP, resulting in the formation of a stable complex. GrpE releases ADP from DnaK; ATP binding to DnaK triggers the release of the substrate protein, thus completing the reaction cycle. Several rounds of ATP-dependent interactions between DnaJ, DnaK and GrpE are required for fully efficient folding. The polypeptide is Protein GrpE (Campylobacter jejuni subsp. doylei (strain ATCC BAA-1458 / RM4099 / 269.97)).